The primary structure comprises 1947 residues: DNA-directed RNA polymerase subunit beta' (1947 aa).

Zn(2+) is bound by residues Cys-119, Cys-121, Cys-141, and Cys-144. Residues Asp-1778, Asp-1780, and Asp-1782 each coordinate Mg(2+).

It belongs to the RNA polymerase beta' chain family. RpoC1 subfamily. In plastids the minimal PEP RNA polymerase catalytic core is composed of four subunits: alpha, beta, beta', and beta''. When a (nuclear-encoded) sigma factor is associated with the core the holoenzyme is formed, which can initiate transcription. Mg(2+) serves as cofactor. Zn(2+) is required as a cofactor.

It localises to the plastid. It is found in the chloroplast. It carries out the reaction RNA(n) + a ribonucleoside 5'-triphosphate = RNA(n+1) + diphosphate. In terms of biological role, DNA-dependent RNA polymerase catalyzes the transcription of DNA into RNA using the four ribonucleoside triphosphates as substrates. The polypeptide is DNA-directed RNA polymerase subunit beta' (Oedogonium cardiacum (Filamentous green alga)).